A 140-amino-acid polypeptide reads, in one-letter code: Transcription antitermination protein NusB (140 aa).

Belongs to the NusB family.

In terms of biological role, involved in transcription antitermination. Required for transcription of ribosomal RNA (rRNA) genes. Binds specifically to the boxA antiterminator sequence of the ribosomal RNA (rrn) operons. The sequence is that of Transcription antitermination protein NusB from Alteromonas mediterranea (strain DSM 17117 / CIP 110805 / LMG 28347 / Deep ecotype).